Here is a 110-residue protein sequence, read N- to C-terminus: Chloride intracellular channel protein 1 (110 aa).

N-acetylalanine is present on alanine 2. The interval 2-90 is required for insertion into the membrane; it reads AEEQPQVELF…EEFLEAVLCP (89 aa). At lysine 13 the chain carries N6-acetyllysine. The short motif at 24-27 is the G-site element; sequence CPFS. Cysteine 24 and cysteine 59 are oxidised to a cystine. Residues 26-46 traverse the membrane as a helical segment; it reads FSQRLFMVLWLKGVTFNVTTV.

The protein belongs to the chloride channel CLIC family. In terms of assembly, monomer. Homodimer (in vitro). Interacts with TRAPPC2. Dimerization requires a conformation change that leads to the exposure of a large hydrophobic surface. In vivo, this may lead to membrane insertion.

The protein resides in the nucleus. It is found in the nucleus membrane. The protein localises to the cytoplasm. Its subcellular location is the cell membrane. It localises to the endoplasmic reticulum. The enzyme catalyses L-dehydroascorbate + 2 glutathione = glutathione disulfide + L-ascorbate. It catalyses the reaction chloride(in) = chloride(out). The catalysed reaction is iodide(out) = iodide(in). It carries out the reaction thiocyanate(in) = thiocyanate(out). The enzyme catalyses nitrate(in) = nitrate(out). It catalyses the reaction bromide(in) = bromide(out). The catalysed reaction is fluoride(in) = fluoride(out). Functionally, in the soluble state, catalyzes glutaredoxin-like thiol disulfide exchange reactions with reduced glutathione as electron donor. Reduces selenite and dehydroascorbate and may act as an antioxidant during oxidative stress response. Can insert into membranes and form voltage-dependent multi-ion conductive channels. Membrane insertion seems to be redox-regulated and may occur only under oxidizing conditions. Involved in regulation of the cell cycle. The polypeptide is Chloride intracellular channel protein 1 (CLIC1) (Sus scrofa (Pig)).